A 397-amino-acid chain; its full sequence is DnaJ homolog subfamily A member 1 (397 aa).

The 63-residue stretch at 6 to 68 (TYYDVLGVKP…KKRELYDKGG (63 aa)) folds into the J domain. Lys66 carries the post-translational modification N6-acetyllysine. Residue Ser83 is modified to Phosphoserine. The CR-type zinc-finger motif lies at 121–205 (GATRKLALQK…CNGRKIVREK (85 aa)). Zn(2+) is bound by residues Cys134, Cys137, Cys150, Cys153, Cys177, Cys180, Cys193, and Cys196. CXXCXGXG motif repeat units lie at residues 134-141 (CDKCEGRG), 150-157 (CPNCRGTG), 177-184 (CMECQGHG), and 193-200 (CKSCNGRK). Ser335 carries the post-translational modification Phosphoserine. The tract at residues 352–397 (VEETDEMDQVELVDFDPNQERRRHYNGEAYEDDEHHPRGGVQCQTS) is disordered. The span at 353–365 (EETDEMDQVELVD) shows a compositional bias: acidic residues. Tyr381 carries the phosphotyrosine modification. Cys394 carries the post-translational modification Cysteine methyl ester. Cys394 carries the S-farnesyl cysteine lipid modification. The propeptide at 395-397 (QTS) is removed in mature form.

As to quaternary structure, identified in a complex with HSPA1B and BAX. Interacts with RNF207.

It is found in the membrane. The protein resides in the cytoplasm. It localises to the microsome. Its subcellular location is the mitochondrion. The protein localises to the nucleus. It is found in the perinuclear region. Co-chaperone for HSPA8/Hsc70. Plays a role in protein transport into mitochondria via its role as co-chaperone. Functions as co-chaperone for HSPA1B and negatively regulates the translocation of BAX from the cytosol to mitochondria in response to cellular stress, thereby protecting cells against apoptosis. Stimulates ATP hydrolysis, but not the folding of unfolded proteins mediated by HSPA1A (in vitro). Promotes apoptosis in response to cellular stress mediated by exposure to anisomycin or UV. The protein is DnaJ homolog subfamily A member 1 (DNAJA1) of Chlorocebus aethiops (Green monkey).